A 144-amino-acid polypeptide reads, in one-letter code: Granulocyte-macrophage colony-stimulating factor (144 aa).

A signal peptide spans 1–17; sequence MWLQNLLLLGTVVCSFS. O-linked (GalNAc...) serine glycosylation occurs at serine 24. O-linked (GalNAc...) threonine glycosylation occurs at threonine 27. N-linked (GlcNAc...) asparagine glycans are attached at residues asparagine 44 and asparagine 54. Cystine bridges form between cysteine 71–cysteine 113 and cysteine 105–cysteine 138.

The protein belongs to the GM-CSF family. Monomer. The signaling GM-CSF receptor complex is a dodecamer of two head-to-head hexamers of two alpha, two beta, and two ligand subunits.

It localises to the secreted. Functionally, cytokine that stimulates the growth and differentiation of hematopoietic precursor cells from various lineages, including granulocytes, macrophages, eosinophils and erythrocytes. This Cervus elaphus (Red deer) protein is Granulocyte-macrophage colony-stimulating factor (CSF2).